We begin with the raw amino-acid sequence, 119 residues long: Putative F420H(2)-dependent quinone reductase Rv3178 (119 aa).

Residues 21–23, 27–32, 43–46, and 54–58 contribute to the coenzyme F420-(gamma-Glu)n site; these read RKS, FVAPLL, VASA, and QWYRN.

It belongs to the F420H(2)-dependent quinone reductase family.

The protein resides in the cell membrane. It carries out the reaction oxidized coenzyme F420-(gamma-L-Glu)(n) + a quinol + H(+) = reduced coenzyme F420-(gamma-L-Glu)(n) + a quinone. In terms of biological role, involved in a F420-dependent anti-oxidant mechanism that protects M.tuberculosis against oxidative stress and bactericidal agents. Catalyzes the F420H(2)-dependent two-electron reduction of quinones to dihydroquinones, thereby preventing the formation of cytotoxic semiquinones obtained by the one-electron reduction pathway. Since menaquinone is the sole quinone electron carrier in the respiratory chain in M.tuberculosis, the physiological electron acceptor for Fqr-mediated F420H(2) oxidation is therefore likely to be the endogenous menaquinone found in the membrane fraction of M.tuberculosis. This is Putative F420H(2)-dependent quinone reductase Rv3178 from Mycobacterium tuberculosis (strain ATCC 25618 / H37Rv).